A 197-amino-acid chain; its full sequence is UPF0725 protein At5g41640 (197 aa).

Belongs to the UPF0725 (EMB2204) family.

The chain is UPF0725 protein At5g41640 from Arabidopsis thaliana (Mouse-ear cress).